The chain runs to 154 residues: 6,7-dimethyl-8-ribityllumazine synthase (154 aa).

Residues Phe-22, Ser-56–Glu-58, and Ala-80–Ile-82 each bind 5-amino-6-(D-ribitylamino)uracil. Ser-85 to Thr-86 lines the (2S)-2-hydroxy-3-oxobutyl phosphate pocket. His-88 serves as the catalytic Proton donor. Tyr-113 is a 5-amino-6-(D-ribitylamino)uracil binding site. Arg-127 lines the (2S)-2-hydroxy-3-oxobutyl phosphate pocket.

This sequence belongs to the DMRL synthase family. In terms of assembly, forms an icosahedral capsid composed of 60 subunits, arranged as a dodecamer of pentamers.

The enzyme catalyses (2S)-2-hydroxy-3-oxobutyl phosphate + 5-amino-6-(D-ribitylamino)uracil = 6,7-dimethyl-8-(1-D-ribityl)lumazine + phosphate + 2 H2O + H(+). It functions in the pathway cofactor biosynthesis; riboflavin biosynthesis; riboflavin from 2-hydroxy-3-oxobutyl phosphate and 5-amino-6-(D-ribitylamino)uracil: step 1/2. Catalyzes the formation of 6,7-dimethyl-8-ribityllumazine by condensation of 5-amino-6-(D-ribitylamino)uracil with 3,4-dihydroxy-2-butanone 4-phosphate. This is the penultimate step in the biosynthesis of riboflavin. This chain is 6,7-dimethyl-8-ribityllumazine synthase, found in Persephonella marina (strain DSM 14350 / EX-H1).